The chain runs to 1310 residues: PAN2-PAN3 deadenylation complex catalytic subunit pan2 (1310 aa).

WD repeat units lie at residues 22-61, 67-105, 106-144, and 145-184; these read YHAGPASTIAFDNQDELLWIGTQKGFAGSFIGRELKRFTA, ETDGPLRQFLFVDKGVIFLGSRSVYMAARSGVPIWSIRH, ESMQDLRAMSFTSKGTSEILVAGWQNKMLVIDVNKGEVV, and KELPTQDQYSFLKMSRYICAATNKGTVNILDPITFTIKKQ. Residues 318-463 form a linker region; sequence QFTEIGIPPR…NNDHWSLRPE (146 aa). A USP domain is found at 463–850; that stretch reads EAPPEYRICE…MPVVVMFQVK (388 aa). Residues His-525, Cys-530, Cys-535, Cys-538, Cys-645, Cys-648, Cys-700, and Cys-703 each coordinate Zn(2+). An Exonuclease domain is found at 897–1070; the sequence is IAIDTEFIRL…EDAQTALKLY (174 aa). Residues Asp-900, Glu-902, Asp-1009, and Asp-1062 each coordinate a divalent metal cation. Residues 1121 to 1169 form a disordered region; sequence TPPVPAPGTTEGSFEISNSSTATTGGSALSATGGMGSASASSSMPSTPV. A compositionally biased stretch (low complexity) spans 1139–1168; that stretch reads SSTATTGGSALSATGGMGSASASSSMPSTP.

The protein belongs to the peptidase C19 family. PAN2 subfamily. Forms a heterotrimer with an asymmetric homodimer of the regulatory subunit par-2/pan3 to form the poly(A)-nuclease (PAN) deadenylation complex. A divalent metal cation is required as a cofactor.

The protein localises to the cytoplasm. It carries out the reaction Exonucleolytic cleavage of poly(A) to 5'-AMP.. Its activity is regulated as follows. Positively regulated by the regulatory subunit par-2/pan3. In terms of biological role, catalytic subunit of the poly(A)-nuclease (PAN) deadenylation complex, one of two cytoplasmic mRNA deadenylases involved in mRNA turnover. PAN specifically shortens poly(A) tails of RNA and the activity is stimulated by poly(A)-binding protein pabp-1. PAN deadenylation is followed by rapid degradation of the shortened mRNA tails by the CCR4-NOT complex. Deadenylated mRNAs are then degraded by two alternative mechanisms, namely exosome-mediated 3'-5' exonucleolytic degradation, or deadenylation-dependent mRNA decaping and subsequent 5'-3' exonucleolytic degradation by rgb-30/xrn1. May also be involved in post-transcriptional maturation of mRNA poly(A) tails. The chain is PAN2-PAN3 deadenylation complex catalytic subunit pan2 (par-1) from Neurospora crassa (strain ATCC 24698 / 74-OR23-1A / CBS 708.71 / DSM 1257 / FGSC 987).